A 289-amino-acid chain; its full sequence is NAD kinase (289 aa).

D63 (proton acceptor) is an active-site residue. Residues 63–64 (DG), R68, 138–139 (ND), R149, D168, 179–184 (TGYSLS), and Q238 each bind NAD(+).

This sequence belongs to the NAD kinase family. Requires a divalent metal cation as cofactor.

Its subcellular location is the cytoplasm. It carries out the reaction NAD(+) + ATP = ADP + NADP(+) + H(+). Functionally, involved in the regulation of the intracellular balance of NAD and NADP, and is a key enzyme in the biosynthesis of NADP. Catalyzes specifically the phosphorylation on 2'-hydroxyl of the adenosine moiety of NAD to yield NADP. In Gemmatimonas aurantiaca (strain DSM 14586 / JCM 11422 / NBRC 100505 / T-27), this protein is NAD kinase.